The primary structure comprises 166 residues: Phosphopantetheine adenylyltransferase (166 aa).

Position 10 (threonine 10) interacts with substrate. ATP contacts are provided by residues threonine 10–phenylalanine 11 and histidine 18. Substrate contacts are provided by lysine 42, leucine 75, and arginine 89. ATP-binding positions include glycine 90–arginine 92, glutamate 100, and tyrosine 125–threonine 131.

Belongs to the bacterial CoaD family. Homohexamer. Mg(2+) serves as cofactor.

The protein localises to the cytoplasm. The enzyme catalyses (R)-4'-phosphopantetheine + ATP + H(+) = 3'-dephospho-CoA + diphosphate. The protein operates within cofactor biosynthesis; coenzyme A biosynthesis; CoA from (R)-pantothenate: step 4/5. Functionally, reversibly transfers an adenylyl group from ATP to 4'-phosphopantetheine, yielding dephospho-CoA (dPCoA) and pyrophosphate. In Chlorobaculum parvum (strain DSM 263 / NCIMB 8327) (Chlorobium vibrioforme subsp. thiosulfatophilum), this protein is Phosphopantetheine adenylyltransferase.